Here is a 164-residue protein sequence, read N- to C-terminus: Phosphopantetheine adenylyltransferase (164 aa).

Serine 10 contributes to the substrate binding site. ATP is bound by residues 10 to 11 (SF) and histidine 18. Substrate contacts are provided by lysine 42, threonine 79, and arginine 93. ATP-binding positions include 94–96 (GLR), glutamate 104, and 129–135 (VRPIAAT).

Belongs to the bacterial CoaD family. Homohexamer. It depends on Mg(2+) as a cofactor.

It is found in the cytoplasm. The catalysed reaction is (R)-4'-phosphopantetheine + ATP + H(+) = 3'-dephospho-CoA + diphosphate. Its pathway is cofactor biosynthesis; coenzyme A biosynthesis; CoA from (R)-pantothenate: step 4/5. In terms of biological role, reversibly transfers an adenylyl group from ATP to 4'-phosphopantetheine, yielding dephospho-CoA (dPCoA) and pyrophosphate. The chain is Phosphopantetheine adenylyltransferase from Bradyrhizobium sp. (strain BTAi1 / ATCC BAA-1182).